A 71-amino-acid polypeptide reads, in one-letter code: uncharacterized protein (71 aa).

This is an uncharacterized protein from Homo sapiens (Human).